The following is a 245-amino-acid chain: Nodulation protein G (245 aa).

11 to 35 contacts NAD(+); it reads VTGASGAIGGAIARVLHAQGAIVGL. Serine 139 contacts substrate. Residue tyrosine 152 is the Proton acceptor of the active site.

This sequence belongs to the short-chain dehydrogenases/reductases (SDR) family.

Functionally, proposed to modify Nod factor fatty acyl chain. The chain is Nodulation protein G (nodG) from Rhizobium meliloti (strain 1021) (Ensifer meliloti).